A 142-amino-acid chain; its full sequence is MPPKKKIAALVKVQLQAGAATPAPPVGTALGPHGVNIMEFCKAYNAQTESMRGNVIPVEITIYEDRSFTFITKTPPAAELIKKAAGLQKGSGVPHKEKVGKLTKDQVREIAQTKLPDLNANDIEAAMKIVEGTARSMGVTTD.

This sequence belongs to the universal ribosomal protein uL11 family. Part of the ribosomal stalk of the 50S ribosomal subunit. Interacts with L10 and the large rRNA to form the base of the stalk. L10 forms an elongated spine to which L12 dimers bind in a sequential fashion forming a multimeric L10(L12)X complex. In terms of processing, one or more lysine residues are methylated.

In terms of biological role, forms part of the ribosomal stalk which helps the ribosome interact with GTP-bound translation factors. This Nocardioides sp. (strain ATCC BAA-499 / JS614) protein is Large ribosomal subunit protein uL11.